Here is a 435-residue protein sequence, read N- to C-terminus: 5-methylthioadenosine/S-adenosylhomocysteine deaminase (435 aa).

Residues H65 and H67 each contribute to the Zn(2+) site. Substrate contacts are provided by E94, R150, and H189. H216 contributes to the Zn(2+) binding site. Residues E219 and D304 each coordinate substrate. Residue D304 coordinates Zn(2+).

The protein belongs to the metallo-dependent hydrolases superfamily. MTA/SAH deaminase family. Zn(2+) is required as a cofactor.

It carries out the reaction S-adenosyl-L-homocysteine + H2O + H(+) = S-inosyl-L-homocysteine + NH4(+). The enzyme catalyses S-methyl-5'-thioadenosine + H2O + H(+) = S-methyl-5'-thioinosine + NH4(+). Functionally, catalyzes the deamination of 5-methylthioadenosine and S-adenosyl-L-homocysteine into 5-methylthioinosine and S-inosyl-L-homocysteine, respectively. Is also able to deaminate adenosine. This chain is 5-methylthioadenosine/S-adenosylhomocysteine deaminase, found in Bacillus cereus (strain ATCC 10987 / NRS 248).